Reading from the N-terminus, the 50-residue chain is uncharacterized protein (50 aa).

The N-terminal stretch at 1–22 (MSKVAALGWGTLVYLGVGLLLA) is a signal peptide.

This is an uncharacterized protein from Dictyostelium discoideum (Social amoeba).